We begin with the raw amino-acid sequence, 189 residues long: Interferon alpha-4 (189 aa).

The signal sequence occupies residues 1–23 (MALSFSLLMAVLVLSYKSICSLG). Intrachain disulfides connect Cys-24–Cys-122 and Cys-52–Cys-162.

This sequence belongs to the alpha/beta interferon family.

The protein resides in the secreted. Functionally, produced by macrophages, IFN-alpha have antiviral activities. Interferon stimulates the production of two enzymes: a protein kinase and an oligoadenylate synthetase. This chain is Interferon alpha-4 (IFNA4), found in Homo sapiens (Human).